Consider the following 61-residue polypeptide: Photosystem II reaction center protein K (61 aa).

Residues 1–24 constitute a propeptide that is removed on maturation; it reads MLNIFSLIWICLNSALYSSGFFFG. A helical membrane pass occupies residues 36–56; the sequence is IIDFMPVIPVFFFLLAFVWQA.

Belongs to the PsbK family. As to quaternary structure, PSII is composed of 1 copy each of membrane proteins PsbA, PsbB, PsbC, PsbD, PsbE, PsbF, PsbH, PsbI, PsbJ, PsbK, PsbL, PsbM, PsbT, PsbX, PsbY, PsbZ, Psb30/Ycf12, at least 3 peripheral proteins of the oxygen-evolving complex and a large number of cofactors. It forms dimeric complexes.

The protein localises to the plastid. It is found in the chloroplast thylakoid membrane. Its function is as follows. One of the components of the core complex of photosystem II (PSII). PSII is a light-driven water:plastoquinone oxidoreductase that uses light energy to abstract electrons from H(2)O, generating O(2) and a proton gradient subsequently used for ATP formation. It consists of a core antenna complex that captures photons, and an electron transfer chain that converts photonic excitation into a charge separation. This Coffea arabica (Arabian coffee) protein is Photosystem II reaction center protein K.